A 318-amino-acid polypeptide reads, in one-letter code: Homoserine kinase (318 aa).

97-107 (PIGSGLGSSAC) provides a ligand contact to ATP.

Belongs to the GHMP kinase family. Homoserine kinase subfamily.

Its subcellular location is the cytoplasm. The catalysed reaction is L-homoserine + ATP = O-phospho-L-homoserine + ADP + H(+). Its pathway is amino-acid biosynthesis; L-threonine biosynthesis; L-threonine from L-aspartate: step 4/5. Functionally, catalyzes the ATP-dependent phosphorylation of L-homoserine to L-homoserine phosphate. The polypeptide is Homoserine kinase (Vibrio cholerae serotype O1 (strain M66-2)).